We begin with the raw amino-acid sequence, 157 residues long: Phosphopantetheine adenylyltransferase (157 aa).

Ser8 provides a ligand contact to substrate. ATP is bound by residues 8 to 9 (SF) and His16. The substrate site is built by Lys40, Thr72, and Arg86. ATP contacts are provided by residues 87-89 (GLR), Glu97, and 122-128 (FSFLSSS).

This sequence belongs to the bacterial CoaD family. In terms of assembly, homohexamer. Mg(2+) serves as cofactor.

Its subcellular location is the cytoplasm. It carries out the reaction (R)-4'-phosphopantetheine + ATP + H(+) = 3'-dephospho-CoA + diphosphate. It functions in the pathway cofactor biosynthesis; coenzyme A biosynthesis; CoA from (R)-pantothenate: step 4/5. Reversibly transfers an adenylyl group from ATP to 4'-phosphopantetheine, yielding dephospho-CoA (dPCoA) and pyrophosphate. The chain is Phosphopantetheine adenylyltransferase from Prochlorococcus marinus (strain MIT 9211).